We begin with the raw amino-acid sequence, 344 residues long: Phenylalanine--tRNA ligase alpha subunit (344 aa).

A Mg(2+)-binding site is contributed by E269.

This sequence belongs to the class-II aminoacyl-tRNA synthetase family. Phe-tRNA synthetase alpha subunit type 1 subfamily. Tetramer of two alpha and two beta subunits. It depends on Mg(2+) as a cofactor.

It localises to the cytoplasm. It catalyses the reaction tRNA(Phe) + L-phenylalanine + ATP = L-phenylalanyl-tRNA(Phe) + AMP + diphosphate + H(+). This is Phenylalanine--tRNA ligase alpha subunit from Ralstonia pickettii (strain 12J).